The sequence spans 220 residues: Probable septum site-determining protein MinC (220 aa).

This sequence belongs to the MinC family. In terms of assembly, interacts with MinD and FtsZ.

Cell division inhibitor that blocks the formation of polar Z ring septums. Rapidly oscillates between the poles of the cell to destabilize FtsZ filaments that have formed before they mature into polar Z rings. Prevents FtsZ polymerization. In Prochlorococcus marinus subsp. pastoris (strain CCMP1986 / NIES-2087 / MED4), this protein is Probable septum site-determining protein MinC.